The following is a 426-amino-acid chain: Dynein regulatory complex protein 10 (426 aa).

Disordered regions lie at residues Thr18–Leu37 and Ser399–Lys426. One can recognise an IQ domain in the interval Met377–Gly406. Positions Ser399–Ala408 are enriched in basic residues. The segment covering Lys409–Lys426 has biased composition (basic and acidic residues).

It belongs to the DRC10 family. In terms of assembly, component of the nexin-dynein regulatory complex (N-DRC). Interacts with CFAP52.

It is found in the cytoplasm. The protein resides in the cytoskeleton. The protein localises to the flagellum axoneme. In terms of biological role, component of the nexin-dynein regulatory complex (N-DRC), a key regulator of ciliary/flagellar motility which maintains the alignment and integrity of the distal axoneme and regulates microtubule sliding in motile axonemes. The polypeptide is Dynein regulatory complex protein 10 (IQCD) (Macaca fascicularis (Crab-eating macaque)).